We begin with the raw amino-acid sequence, 194 residues long: MAPRLVLASQSPRRRELLAQLGLALEIRPADTDERVLPGEPPRDYVLRVAREKARAVPGDLVLAADTAVVLGGEVLGKPRDADDARRMLRALSGTRHEVLTAVCVRRNASALGVELDAVVATEVAFARLGDAEIDWYVGTGEPLDKAGAYAIQGSGGAFVEEVRGSVSNVVGLPLAETAALLRRAGFPLPWERP.

Catalysis depends on aspartate 66, which acts as the Proton acceptor.

The protein belongs to the Maf family. YhdE subfamily. Requires a divalent metal cation as cofactor.

The protein localises to the cytoplasm. The catalysed reaction is dTTP + H2O = dTMP + diphosphate + H(+). It carries out the reaction UTP + H2O = UMP + diphosphate + H(+). Functionally, nucleoside triphosphate pyrophosphatase that hydrolyzes dTTP and UTP. May have a dual role in cell division arrest and in preventing the incorporation of modified nucleotides into cellular nucleic acids. In Anaeromyxobacter dehalogenans (strain 2CP-1 / ATCC BAA-258), this protein is dTTP/UTP pyrophosphatase.